Consider the following 185-residue polypeptide: Large ribosomal subunit protein uL5 (185 aa).

It belongs to the universal ribosomal protein uL5 family. Part of the 50S ribosomal subunit; part of the 5S rRNA/L5/L18/L25 subcomplex. Contacts the 5S rRNA and the P site tRNA. Forms a bridge to the 30S subunit in the 70S ribosome.

In terms of biological role, this is one of the proteins that bind and probably mediate the attachment of the 5S RNA into the large ribosomal subunit, where it forms part of the central protuberance. In the 70S ribosome it contacts protein S13 of the 30S subunit (bridge B1b), connecting the 2 subunits; this bridge is implicated in subunit movement. Contacts the P site tRNA; the 5S rRNA and some of its associated proteins might help stabilize positioning of ribosome-bound tRNAs. The chain is Large ribosomal subunit protein uL5 from Azorhizobium caulinodans (strain ATCC 43989 / DSM 5975 / JCM 20966 / LMG 6465 / NBRC 14845 / NCIMB 13405 / ORS 571).